Consider the following 965-residue polypeptide: MARPSLSPSNPLGFTPWPVTVITAVVYLALVVPLLVVHHVVPSAPSSSPKGLNLTEAWADLQELTHGFHPYNSHRNDEVHEWLLKRILELIDSAPPASEYGSVGEEKPDIVVFDDTQSNLTFSGRGSGLGVYFESTNIMVYIRGWEEDRERWWEDPHGRPAGKGGVLVNAHYDSVSTGYGATDDGVGVVSCLQLIKYFTTPGHVPRRGLVLLFNNGEEDFLNGARVYSQHPISQLPHTFLNLEGAGAGGRATLFRSSDAEVTKPYMRAPHPFGSVLSANGFEAGLISSQTDYVVFEGDLGLRGLDVAFMEPRARYHTDEDDARHTSLASVWHMLSAAVATTEGLVSDASSRFEGLPREDGRIASGSGPKGVWFDLFGSAFVVFELHTLFALSVTLLVVAPLVLLVTSIALARADKMYLFRSSASPEDSDGSEVVPLHGVRGFFRFPFLLVIPTAVTVGLAYLVTKFNPYIIHSSEYAVWSMMISAWVFLAWFVSRVADFARPSAFHRVYTLTWLFLVEWVFLVISTVYENQYGLAGGYFVLFVFAGTFLATWISYLELFALPRKSDYATQLALPSRRTSSHGSRLGTASGEDVEDGEDEDDDGTTAEATETTSLLRGQRTTFANYVRVTGDYLRDDDEEPRQPNLYGHEQAWSIHLPKWVWVLQFLLTAPLVLIFVGPLALLLTSALRQTGQDGSPSLFIYIAVAALTTLLFIPLLPFIHRYTHHIPLFLLCVFAGTLIYNLVAFPFSPANRLKLFFIQEVDLDTGVNHASLSGAYPFVHDVARRLPSTAGQNITCDLAMLRPKCSWHGIPPQVVQPAAASKMEDWLSYNITKSDSEPKAQLSISGRNTRACKVVFDRPVLDFQVADSAYDPRFPHVSPDGTKEIRLWSREWGHTWTVDVEWAADAEETDEKGPGLSGRVVCLWSDGNSAGVIPALDEVRRYAPVWAGVSKLSDGLVEGSRRFEV.

Residues 1-16 (MARPSLSPSNPLGFTP) lie on the Cytoplasmic side of the membrane. Residues 17–37 (WPVTVITAVVYLALVVPLLVV) traverse the membrane as a helical segment. Residues 38–387 (HHVVPSAPSS…SAFVVFELHT (350 aa)) are Vacuolar-facing. N-linked (GlcNAc...) asparagine glycans are attached at residues Asn53 and Asn119. Residues His171 and Asp183 each contribute to the Zn(2+) site. Catalysis depends on Glu217, which acts as the Proton acceptor. Zn(2+) is bound by residues Glu218, Glu243, and His316. Residues 388–408 (LFALSVTLLVVAPLVLLVTSI) form a helical membrane-spanning segment. Residues 409–441 (ALARADKMYLFRSSASPEDSDGSEVVPLHGVRG) lie on the Cytoplasmic side of the membrane. The helical transmembrane segment at 442–462 (FFRFPFLLVIPTAVTVGLAYL) threads the bilayer. Over 463 to 472 (VTKFNPYIIH) the chain is Vacuolar. Residues 473–493 (SSEYAVWSMMISAWVFLAWFV) traverse the membrane as a helical segment. Residues 494–507 (SRVADFARPSAFHR) lie on the Cytoplasmic side of the membrane. Residues 508–528 (VYTLTWLFLVEWVFLVISTVY) traverse the membrane as a helical segment. Residues 529 to 532 (ENQY) lie on the Vacuolar side of the membrane. Residues 533–553 (GLAGGYFVLFVFAGTFLATWI) traverse the membrane as a helical segment. Topologically, residues 554–661 (SYLELFALPR…WSIHLPKWVW (108 aa)) are cytoplasmic. Residues 577-610 (RTSSHGSRLGTASGEDVEDGEDEDDDGTTAEATE) are disordered. A compositionally biased stretch (acidic residues) spans 591–604 (EDVEDGEDEDDDGT). Residues 662-682 (VLQFLLTAPLVLIFVGPLALL) form a helical membrane-spanning segment. Topologically, residues 683 to 698 (LTSALRQTGQDGSPSL) are vacuolar. Residues 699-719 (FIYIAVAALTTLLFIPLLPFI) form a helical membrane-spanning segment. The Cytoplasmic segment spans residues 720–725 (HRYTHH). Residues 726-746 (IPLFLLCVFAGTLIYNLVAFP) form a helical membrane-spanning segment. The Vacuolar portion of the chain corresponds to 747 to 965 (FSPANRLKLF…LVEGSRRFEV (219 aa)). N-linked (GlcNAc...) asparagine glycans are attached at residues Asn793 and Asn830.

Belongs to the peptidase M28 family. Zn(2+) serves as cofactor.

Its subcellular location is the vacuole membrane. In terms of biological role, may be involved in vacuolar sorting and osmoregulation. This Aspergillus fumigatus (strain CBS 144.89 / FGSC A1163 / CEA10) (Neosartorya fumigata) protein is Vacuolar membrane protease.